A 231-amino-acid polypeptide reads, in one-letter code: Large ribosomal subunit protein uL1 (231 aa).

The protein belongs to the universal ribosomal protein uL1 family. Part of the 50S ribosomal subunit.

In terms of biological role, binds directly to 23S rRNA. The L1 stalk is quite mobile in the ribosome, and is involved in E site tRNA release. Its function is as follows. Protein L1 is also a translational repressor protein, it controls the translation of the L11 operon by binding to its mRNA. The polypeptide is Large ribosomal subunit protein uL1 (Polaromonas naphthalenivorans (strain CJ2)).